The sequence spans 462 residues: MRSFLRYFSSVKEATQFRFESCRVENKSYIRLLGPDSIKFLNGLVTSKLQPNFVKKNLTTISTKEQEKNNTLSSLNFSKYNWGIYKECTRLEDHISRFGTYTGFLNMKGKLLTDSIIYPYPFTLKSIQDKKFPEYLMEFDSHIAQKMERTLDNHKLLSKVKFKHVQNEELRTWDAYITMPEEYQLLENLLNPMQEMKDGEQALHFANFFASMFFQGNEHKLKAVYFDTRLIDDMYEGKIKPMFRIVTDNSVSDINDIFNCTAFGENPFEKANISATEIQKERFKFGLFDGNHEYIPETLLALEANFDYFEDSINSDKGCYVGQELTARTFATGVLKKRCVGITIDEPQKLADWDHSKYLSIFSKLELQVQNQDTQAAINPFGSLSKPVKKRTRPAGQLINYNGNIGVAVVRKDYIYHALKHHHDIDAYVELPNKETVACSIKLEWLDRFLEETEAEEVEQEQ.

The transit peptide at 1 to 15 (MRSFLRYFSSVKEAT) directs the protein to the mitochondrion.

This sequence belongs to the GcvT family. CAF17/IBA57 subfamily.

It localises to the mitochondrion matrix. This chain is Iron-sulfur cluster assembly factor IBA57 homolog, mitochondrial (CAF17), found in Kluyveromyces lactis (strain ATCC 8585 / CBS 2359 / DSM 70799 / NBRC 1267 / NRRL Y-1140 / WM37) (Yeast).